A 212-amino-acid polypeptide reads, in one-letter code: Large ribosomal subunit protein uL3 (212 aa).

A disordered region spans residues 131 to 155; it reads RGNMTHGSKNHRLPGSTGAGTTPGR.

Belongs to the universal ribosomal protein uL3 family. Part of the 50S ribosomal subunit. Forms a cluster with proteins L14 and L19.

Functionally, one of the primary rRNA binding proteins, it binds directly near the 3'-end of the 23S rRNA, where it nucleates assembly of the 50S subunit. The polypeptide is Large ribosomal subunit protein uL3 (Microcystis aeruginosa (strain NIES-843 / IAM M-2473)).